The sequence spans 710 residues: Mitochondrial intermediate peptidase (710 aa).

The transit peptide at 1–33 (MLLAAGTRYAYRLCGRRAAAALQGRAGRSCARS) directs the protein to the mitochondrion. Lys-124 is modified (N6-acetyllysine). His-492 is a binding site for Zn(2+). Glu-493 is a catalytic residue. Zn(2+)-binding residues include His-496 and His-499.

Belongs to the peptidase M3 family. As to quaternary structure, monomer. The cofactor is Zn(2+).

The protein resides in the mitochondrion matrix. The catalysed reaction is Release of an N-terminal octapeptide as second stage of processing of some proteins imported into the mitochondrion.. Activity is divalent cation-dependent. It is stimulated by manganese, magnesium or calcium ions and reversibly inhibited by zinc, cobalt and iron. Functionally, cleaves proteins, imported into the mitochondrion, to their mature size. This chain is Mitochondrial intermediate peptidase (Mipep), found in Rattus norvegicus (Rat).